A 340-amino-acid polypeptide reads, in one-letter code: DNA-directed RNA polymerase subunit alpha (340 aa).

Residues 1 to 233 (MYRNWRDLIS…EQLSIFINFD (233 aa)) are alpha N-terminal domain (alpha-NTD). Residues 251–340 (INENLYRSVD…RLRGERKDEE (90 aa)) form an alpha C-terminal domain (alpha-CTD) region.

It belongs to the RNA polymerase alpha chain family. As to quaternary structure, homodimer. The RNAP catalytic core consists of 2 alpha, 1 beta, 1 beta' and 1 omega subunit. When a sigma factor is associated with the core the holoenzyme is formed, which can initiate transcription.

The enzyme catalyses RNA(n) + a ribonucleoside 5'-triphosphate = RNA(n+1) + diphosphate. Its function is as follows. DNA-dependent RNA polymerase catalyzes the transcription of DNA into RNA using the four ribonucleoside triphosphates as substrates. In Geobacter sulfurreducens (strain ATCC 51573 / DSM 12127 / PCA), this protein is DNA-directed RNA polymerase subunit alpha.